The following is a 343-amino-acid chain: 3-isopropylmalate dehydrogenase (343 aa).

Substrate-binding residues include Arg-94, Arg-104, Arg-128, and Asp-218. Mg(2+) contacts are provided by Asp-218, Asp-242, and Asp-246. 278–290 (GSAPDIAGQNKAN) is an NAD(+) binding site.

The protein belongs to the isocitrate and isopropylmalate dehydrogenases family. LeuB type 2 subfamily. In terms of assembly, homodimer. Requires Mg(2+) as cofactor. Mn(2+) is required as a cofactor.

It localises to the cytoplasm. It carries out the reaction (2R,3S)-3-isopropylmalate + NAD(+) = 4-methyl-2-oxopentanoate + CO2 + NADH. It participates in amino-acid biosynthesis; L-leucine biosynthesis; L-leucine from 3-methyl-2-oxobutanoate: step 3/4. Catalyzes the oxidation of 3-carboxy-2-hydroxy-4-methylpentanoate (3-isopropylmalate) to 3-carboxy-4-methyl-2-oxopentanoate. The product decarboxylates to 4-methyl-2 oxopentanoate. In Bifidobacterium longum subsp. infantis (strain ATCC 15697 / DSM 20088 / JCM 1222 / NCTC 11817 / S12), this protein is 3-isopropylmalate dehydrogenase.